A 676-amino-acid chain; its full sequence is Electrogenic aspartate/glutamate antiporter SLC25A13, mitochondrial (676 aa).

Alanine 2 carries the post-translational modification N-acetylalanine. Residues 2-295 (AAAKVALTKR…TLADIERIAP (294 aa)) form a regulatory N-terminal domain region. Residues 2-332 (AAAKVALTKR…LLQLAESAYR (331 aa)) are Mitochondrial intermembrane-facing. Lysine 18 is subject to N6-acetyllysine. 4 EF-hand domains span residues 51 to 86 (SQPNPKTVELLSGVVDQTKDGLISFQEFVAFESVLC), 87 to 122 (APDALFMVAFQLFDKAGKGEVTFEDVKQIFGQTTIH), 123 to 157 (QHIPFNWDSEFVQLHFGKERKRHLTYAEFTQFLLE), and 158 to 193 (IQLEHAKQAFVQRDNAKTGKVSAIDFRDIMVTIRPH). Residues aspartate 66, threonine 68, aspartate 70, leucine 72, and glutamate 77 each coordinate Ca(2+). The interval 296 to 311 (LEEGMLPFNLAEAQRQ) is linker loop domain. Residues 322–613 (FLLQLAESAY…LQRWFYVDFG (292 aa)) form a carrier domain region. 3 Solcar repeats span residues 327 to 419 (AESA…VRDK), 427 to 511 (VPLL…VKAS), and 519 to 607 (VSPG…LQRW). The chain crosses the membrane as a helical span at residues 333-350 (FGLGSIAGAVGATAVYPI). Residues 351–393 (DLVKTRMQNQRSTGSFVGELMYKNSFDCFKKVLRYEGFFGLYR) are Mitochondrial matrix-facing. Residues lysine 354 and lysine 373 each carry the N6-acetyllysine modification. Residues 394 to 413 (GLLPQLLGVAPEKAIKLTVN) traverse the membrane as a helical segment. The Mitochondrial intermembrane portion of the chain corresponds to 414-436 (DFVRDKFMHKDGSVPLLAEIFAG). The chain crosses the membrane as a helical span at residues 437 to 450 (GCAGGSQVIFTNPL). Residues 451 to 485 (EIVKIRLQVAGEITTGPRVSALSVVRDLGFFGIYK) are Mitochondrial matrix-facing. The residue at position 454 (lysine 454) is an N6-methyllysine. An N6-acetyllysine; alternate modification is found at lysine 485. Lysine 485 carries the post-translational modification N6-succinyllysine; alternate. A helical membrane pass occupies residues 486–505 (GAKACFLRDIPFSAIYFPCY). Over 506–524 (AHVKASFANEDGQVSPGSL) the chain is Mitochondrial intermembrane. A helical membrane pass occupies residues 525 to 542 (LLAGAIAGMPAASLVTPA). Residues 543-581 (DVIKTRLQVAARAGQTTYNGVTDCFRKILREEGPKALWK) lie on the Mitochondrial matrix side of the membrane. The residue at position 581 (lysine 581) is an N6-succinyllysine. The helical transmembrane segment at 582–601 (GVAARVFRSSPQFGVTLLTY) threads the bilayer. The Mitochondrial intermembrane portion of the chain corresponds to 602 to 676 (ELLQRWFYVD…STSKVTAGDS (75 aa)). The tract at residues 614–676 (GVKPVGSEPV…STSKVTAGDS (63 aa)) is C-terminal domain. An N6-acetyllysine modification is found at lysine 663. At serine 667 the chain carries Phosphoserine.

It belongs to the mitochondrial carrier (TC 2.A.29) family. As to quaternary structure, homodimer (via N-terminus). In terms of tissue distribution, at 10.5 dpc, expressed in branchial arches, a well as in the limb and tail buds. At 13.5 dpc expression is predominant in epithelial structures and the forebrain, kidney and liver. Expression in liver is maintained into adulthood.

It localises to the mitochondrion inner membrane. The enzyme catalyses L-aspartate(in) + L-glutamate(out) + H(+)(out) = L-aspartate(out) + L-glutamate(in) + H(+)(in). It catalyses the reaction 3-sulfino-L-alanine(out) + L-glutamate(in) + H(+)(in) = 3-sulfino-L-alanine(in) + L-glutamate(out) + H(+)(out). It carries out the reaction 3-sulfino-L-alanine(out) + L-aspartate(in) = 3-sulfino-L-alanine(in) + L-aspartate(out). In terms of biological role, mitochondrial electrogenic aspartate/glutamate antiporter that favors efflux of aspartate and entry of glutamate and proton within the mitochondria as part of the malate-aspartate shuttle. Also mediates the uptake of L-cysteinesulfinate (3-sulfino-L-alanine) by mitochondria in exchange of L-glutamate and proton. Can also exchange L-cysteinesulfinate with aspartate in their anionic form without any proton translocation. Lacks transport activity towards gamma-aminobutyric acid (GABA). This is Electrogenic aspartate/glutamate antiporter SLC25A13, mitochondrial from Mus musculus (Mouse).